The sequence spans 211 residues: Thymidylate kinase (211 aa).

11 to 18 (GPDGAGKT) is a binding site for ATP.

It belongs to the thymidylate kinase family.

The enzyme catalyses dTMP + ATP = dTDP + ADP. Phosphorylation of dTMP to form dTDP in both de novo and salvage pathways of dTTP synthesis. This chain is Thymidylate kinase, found in Streptococcus pyogenes serotype M18 (strain MGAS8232).